Here is an 89-residue protein sequence, read N- to C-terminus: Acylphosphatase (89 aa).

The Acylphosphatase-like domain maps to Q3–I89. Active-site residues include R18 and N36.

This sequence belongs to the acylphosphatase family.

The enzyme catalyses an acyl phosphate + H2O = a carboxylate + phosphate + H(+). In Staphylococcus haemolyticus (strain JCSC1435), this protein is Acylphosphatase (acyP).